Here is a 72-residue protein sequence, read N- to C-terminus: MAKDDVIEVEGTVTDTLPNAMFKVELENGHTVLAHVSGKIRMHFIRILPGDKVTVELSPYDLTRGRITYRYK.

An S1-like domain is found at 1–72 (MAKDDVIEVE…TRGRITYRYK (72 aa)). At Tyr-60 the chain carries Phosphotyrosine.

The protein belongs to the IF-1 family. In terms of assembly, component of the 30S ribosomal translation pre-initiation complex which assembles on the 30S ribosome in the order IF-2 and IF-3, IF-1 and N-formylmethionyl-tRNA(fMet); mRNA recruitment can occur at any time during PIC assembly.

It localises to the cytoplasm. One of the essential components for the initiation of protein synthesis. Stabilizes the binding of IF-2 and IF-3 on the 30S subunit to which N-formylmethionyl-tRNA(fMet) subsequently binds. Helps modulate mRNA selection, yielding the 30S pre-initiation complex (PIC). Upon addition of the 50S ribosomal subunit IF-1, IF-2 and IF-3 are released leaving the mature 70S translation initiation complex. The polypeptide is Translation initiation factor IF-1 (Oceanobacillus iheyensis (strain DSM 14371 / CIP 107618 / JCM 11309 / KCTC 3954 / HTE831)).